We begin with the raw amino-acid sequence, 637 residues long: MGKIIGIDLGTTNSCVAVLDGDKPRVIENAEGERTTASVIAYTDGETLVGQPAKRQAVTNPTNTLFAIKRLIGRRFEDEEVQRDIEIMPYKIVKADNGDAWVEAKGQKMAAPQVSAEVLKKMKKTAEDFLGEEVTGAVITVPAYFNDAQRQATKDAGRIAGLEVKRIINEPTAAALAYGLDKKGGDRTIAVYDLGGGTFDISIIEIDEVEGEKTFEVLATNGDTHLGGEDFDNRLINYLVDEFKKEQGIDLKNDPLAMQRVKEAAEKAKIELSSTSQTDVNLPYVTADATGPKHMNIKVTRAKLESLVEDLVQRSLEPLKVALADADLSVNDITDVILVGGQTRMPMVQAKVAEFFGKEARRDVNPDEAVAMGAAVQGGVLAGEVKDVLLLDVTPLSLGIETMGGVMTKLVEKNTTIPTKANQVFSTAEDNQSAVTIHVLQGERKQAMYNKSLGQFNLEGIQPAPRGMPQIEVTFDLDADGILHVSAKDKQTGKEQKITIQASGGLSDDEIEKMVQEAEANKEADKKFEELATARNQADQMIHGTRKQMEEAGDALPAEEKEKIETAISELEEARKGEDKEAIDAKVQALMTAAQKLMEIAQQQAQAQQAQGADAGAQSKDDDVVDAEFEEVKDDKK.

A Phosphothreonine; by autocatalysis modification is found at Thr-198. A disordered region spans residues 600-637 (IAQQQAQAQQAQGADAGAQSKDDDVVDAEFEEVKDDKK). Over residues 601-618 (AQQQAQAQQAQGADAGAQ) the composition is skewed to low complexity. The span at 623 to 637 (DVVDAEFEEVKDDKK) shows a compositional bias: acidic residues.

It belongs to the heat shock protein 70 family.

Its function is as follows. Acts as a chaperone. The chain is Chaperone protein DnaK from Vibrio parahaemolyticus serotype O3:K6 (strain RIMD 2210633).